Here is a 216-residue protein sequence, read N- to C-terminus: 3-keto-L-gulonate-6-phosphate decarboxylase UlaD (216 aa).

Position 11 (aspartate 11) interacts with substrate. Glutamate 33 and aspartate 62 together coordinate Mg(2+). Residue arginine 192 coordinates substrate.

Belongs to the HPS/KGPDC family. KGPDC subfamily. In terms of assembly, homodimer. The cofactor is Mg(2+).

The enzyme catalyses 3-dehydro-L-gulonate 6-phosphate + H(+) = L-xylulose 5-phosphate + CO2. The protein operates within cofactor degradation; L-ascorbate degradation; D-xylulose 5-phosphate from L-ascorbate: step 2/4. Functionally, catalyzes the decarboxylation of 3-keto-L-gulonate-6-P into L-xylulose-5-P. Is involved in the anaerobic L-ascorbate utilization. This is 3-keto-L-gulonate-6-phosphate decarboxylase UlaD from Salmonella choleraesuis (strain SC-B67).